The primary structure comprises 482 residues: DNA polymerase II small subunit (482 aa).

Belongs to the DNA polymerase delta/II small subunit family. Heterodimer of a large subunit and a small subunit.

The enzyme catalyses DNA(n) + a 2'-deoxyribonucleoside 5'-triphosphate = DNA(n+1) + diphosphate. It catalyses the reaction Exonucleolytic cleavage in the 3'- to 5'-direction to yield nucleoside 5'-phosphates.. Possesses two activities: a DNA synthesis (polymerase) and an exonucleolytic activity that degrades single-stranded DNA in the 3' to 5' direction. Has a template-primer preference which is characteristic of a replicative DNA polymerase. The sequence is that of DNA polymerase II small subunit (polB) from Methanothermobacter thermautotrophicus (strain ATCC 29096 / DSM 1053 / JCM 10044 / NBRC 100330 / Delta H) (Methanobacterium thermoautotrophicum).